We begin with the raw amino-acid sequence, 467 residues long: MSLPSPPVLKTTIIQLNKELDPEDDNNNYEILTNDYNNYGSSNTSDAGSIPTSPIIEVSGTTKSGSGLPNKKKRRRSTANIDSEELAKRKNETKQLHSIIEKRRRIKINREFEALKYLIPACRNCNTGSSGGSATPTSSTKKASTNSNNNGNKIDGMYKLTILKSSVEYILYLHHIIQKQHQLLSSISAKDTNGGILAEKLKAFEDFDIDFAKVPLNVNQYRNIDKDFNFKDLMQDLDGRSVNTESPETIIEENEPVSETSSTNNTTTLHYSNSSVLPSRTSSIVSSRQSSSLPTPELTPILSILNKYSTSNNQLNNRKNSNPISPQTVCIKSQNPSPFTMPMKSSLSTSIVNSPSSSSSLSGSKSYMAGNNAVNTVKFSLPDPVVNPNSTLNDNIPRKGLISGIPEEEEEEKINKGSANTETVNSGSASSDENNDNDRGVLLKLTDQDVSKTLLALRKSSIDSLLN.

Over residues 43-52 (NTSDAGSIPT) the composition is skewed to polar residues. Disordered regions lie at residues 43–83 (NTSD…NIDS), 128–149 (GSSGGSATPTSSTKKASTNSNN), 245–275 (ESPETIIEENEPVSETSSTNNTTTLHYSNSS), 312–365 (NNQL…SGSK), and 390–439 (STLN…DNDR). A bHLH domain is found at 92 to 173 (ETKQLHSIIE…KSSVEYILYL (82 aa)). Low complexity-rich tracts occupy residues 257–275 (VSETSSTNNTTTLHYSNSS) and 312–322 (NNQLNNRKNSN). Residues 323–338 (PISPQTVCIKSQNPSP) show a composition bias toward polar residues. Low complexity predominate over residues 345 to 365 (SSLSTSIVNSPSSSSSLSGSK). Over residues 417–432 (GSANTETVNSGSASSD) the composition is skewed to polar residues.

The protein localises to the nucleus. Functionally, transcription factor required for yeast cell adherence to silicone substrate. In Candida albicans (strain SC5314 / ATCC MYA-2876) (Yeast), this protein is Transcriptional regulator of yeast form adherence 6 (TRY6).